Here is a 424-residue protein sequence, read N- to C-terminus: Double homeobox protein 4 (424 aa).

Over residues 1–10 (MALPTPSDST) the composition is skewed to polar residues. 4 disordered regions span residues 1 to 24 (MALP…RRRL), 72 to 102 (SRQL…TAVT), 218 to 362 (LQPS…LQEP), and 388 to 414 (QPLL…PLSE). 2 DNA-binding regions (homeobox) span residues 19-78 (GRRR…LRQH) and 94-153 (GRRK…PGQG). The segment covering 265-274 (KSREDRDPQR) has biased composition (basic and acidic residues). Composition is skewed to low complexity over residues 278-302 (PGPC…LAPP) and 319-329 (AGAAWEPQAGA). Residues 327-424 (AGAAPPPQPA…EEYRALLEEL (98 aa)) are required for interaction with EP300 and CREBBP, and for transcriptional activation of target genes. The interval 405 to 424 (AASLEAPLSEEEYRALLEEL) is important for transcriptional activation of target genes.

Belongs to the paired homeobox family. As to quaternary structure, binds DNA as a monomer. Interacts (via C-terminus) with EP300 and CREBBP. Isoform 1: Does not seem to be expressed in normal muscle, but is detected in muscle of individuals with FSHD, and also in testis (at protein level). Isoform 1: Does not seem to be expressed in normal muscle, but in muscle of individuals with FSHD, where it may be toxic to cells. Isoform 2: Detected in skeletal muscle, fibroblasts and testis from healthy individuals.

The protein localises to the nucleus. It is found in the cytoplasm. Transcription factor that is selectively and transiently expressed in cleavage-stage embryos. Binds to double-stranded DNA elements with the consensus sequence 5'-TAATCTAATCA-3'. Binds to chromatin containing histone H3 acetylated at 'Lys-27' (H3K27ac) and promotes deacetylation of H3K27ac. In parallel, binds to chromatin that lacks histone H3 acetylation at 'Lys-27' (H3K27ac) and recruits EP300 and CREBBP to promote acetylation of histone H3 at 'Lys-27' at new sites. Involved in transcriptional regulation of numerous genes, primarily as transcriptional activator, but also mediates repression of a set of target genes. Promotes expression of ZSCAN4 and KDM4E, two proteins with essential roles during early embryogenesis. Promotes nuclear translocation of CTNNB1/beta-catenin and its subsequent activation of target genes. Heterologous expression in cultured embryonic stem cells mediates transcription of HERVL retrotransposons and transcripts derived from ACRO1 and HSATII satellite repeats. May activate expression of PITX1. May regulate microRNA (miRNA) expression. Inappropriate expression can inhibit myogenesis and promote apoptosis. Functionally, probably inactive as a transcriptional activator, due to the absence of the C-terminal region that is important for transcriptional activation. Can inhibit transcriptional activation mediated by isoform 1. Heterologous expression of isoform 2 has no deleterious effect on cell survival. The protein is Double homeobox protein 4 of Homo sapiens (Human).